Reading from the N-terminus, the 272-residue chain is D-aminoacyl-tRNA deacylase (272 aa).

This sequence belongs to the DtdA deacylase family. As to quaternary structure, monomer. Zn(2+) serves as cofactor.

The catalysed reaction is a D-aminoacyl-tRNA + H2O = a tRNA + a D-alpha-amino acid + H(+). The enzyme catalyses glycyl-tRNA(Ala) + H2O = tRNA(Ala) + glycine + H(+). In terms of biological role, D-aminoacyl-tRNA deacylase with broad substrate specificity. By recycling D-aminoacyl-tRNA to D-amino acids and free tRNA molecules, this enzyme counteracts the toxicity associated with the formation of D-aminoacyl-tRNA entities in vivo. The sequence is that of D-aminoacyl-tRNA deacylase from Desulfurococcus amylolyticus (strain DSM 18924 / JCM 16383 / VKM B-2413 / 1221n) (Desulfurococcus kamchatkensis).